Here is a 288-residue protein sequence, read N- to C-terminus: Bifunctional protein FolD (288 aa).

Residues 166-168 and isoleucine 232 contribute to the NADP(+) site; that span reads GAS.

It belongs to the tetrahydrofolate dehydrogenase/cyclohydrolase family. Homodimer.

It carries out the reaction (6R)-5,10-methylene-5,6,7,8-tetrahydrofolate + NADP(+) = (6R)-5,10-methenyltetrahydrofolate + NADPH. The enzyme catalyses (6R)-5,10-methenyltetrahydrofolate + H2O = (6R)-10-formyltetrahydrofolate + H(+). The protein operates within one-carbon metabolism; tetrahydrofolate interconversion. Functionally, catalyzes the oxidation of 5,10-methylenetetrahydrofolate to 5,10-methenyltetrahydrofolate and then the hydrolysis of 5,10-methenyltetrahydrofolate to 10-formyltetrahydrofolate. This Escherichia coli O139:H28 (strain E24377A / ETEC) protein is Bifunctional protein FolD.